Reading from the N-terminus, the 125-residue chain is Profilin-A (125 aa).

An N-acetylserine modification is found at serine 2.

Belongs to the profilin family. In terms of assembly, occurs in many kinds of cells as a complex with monomeric actin in a 1:1 ratio.

Its subcellular location is the cytoplasm. The protein localises to the cytoskeleton. Functionally, binds to actin and affects the structure of the cytoskeleton. At high concentrations, profilin prevents the polymerization of actin, whereas it enhances it at low concentrations. By binding to PIP2, it inhibits the formation of IP3 and DG. This Physarum polycephalum (Slime mold) protein is Profilin-A (PROA).